The primary structure comprises 421 residues: MSKTHLTEQKFSDFALHPKVVEALEKKGFHNCTPIQALALPLTLAGRDVAGQAQTGTGKTMAFLTSTFHYLLSHPAIADRKVNQPRALIMAPTRELAVQIHADAEPLAQATGLKLGLAYGGDGYDKQLKVLESGVDILIGTTGRLIDYAKQNHINLGAIQVVVLDEADRMYDLGFIKDIRWLFRRMPPANQRLNMLFSATLSYRVRELAFEQMNNAEYIEVEPEQKTGHRIKEELFYPSNEEKMRLLQTLIEEEWPDRAIIFANTKHRCEEIWGHLAADGHRVGLLTGDVAQKKRLRILDEFTRGDLDILVATDVAARGLHIPAVTHVFNYDLPDDCEDYVHRIGRTGRAGASGHSISLACEEYALNLPAIETYIGHSIPVSKYNPDALMTDLPKPLRLTRPRTGNGPRRTGTPRNRRRSG.

Residues 9-37 (QKFSDFALHPKVVEALEKKGFHNCTPIQA) carry the Q motif motif. Residues 40–219 (LPLTLAGRDV…FEQMNNAEYI (180 aa)) enclose the Helicase ATP-binding domain. Residue 53–60 (AQTGTGKT) participates in ATP binding. The DEAD box signature appears at 165-168 (DEAD). Positions 245 to 390 (RLLQTLIEEE…VSKYNPDALM (146 aa)) constitute a Helicase C-terminal domain. Positions 392 to 421 (DLPKPLRLTRPRTGNGPRRTGTPRNRRRSG) are disordered. Positions 402–414 (PRTGNGPRRTGTP) are enriched in low complexity.

The protein belongs to the DEAD box helicase family. RhlB subfamily. As to quaternary structure, component of the RNA degradosome, which is a multiprotein complex involved in RNA processing and mRNA degradation.

It is found in the cytoplasm. It carries out the reaction ATP + H2O = ADP + phosphate + H(+). In terms of biological role, DEAD-box RNA helicase involved in RNA degradation. Has RNA-dependent ATPase activity and unwinds double-stranded RNA. This Escherichia coli O7:K1 (strain IAI39 / ExPEC) protein is ATP-dependent RNA helicase RhlB.